The sequence spans 121 residues: Small ribosomal subunit protein uS13 (121 aa).

Residues 97–121 (PVRGQKTHSNARTRKGPRASRIKKK) are disordered. Residues 101-121 (QKTHSNARTRKGPRASRIKKK) show a composition bias toward basic residues.

It belongs to the universal ribosomal protein uS13 family. As to quaternary structure, part of the 30S ribosomal subunit. Forms a loose heterodimer with protein S19. Forms two bridges to the 50S subunit in the 70S ribosome.

In terms of biological role, located at the top of the head of the 30S subunit, it contacts several helices of the 16S rRNA. In the 70S ribosome it contacts the 23S rRNA (bridge B1a) and protein L5 of the 50S subunit (bridge B1b), connecting the 2 subunits; these bridges are implicated in subunit movement. Contacts the tRNAs in the A and P-sites. The sequence is that of Small ribosomal subunit protein uS13 from Kosmotoga olearia (strain ATCC BAA-1733 / DSM 21960 / TBF 19.5.1).